We begin with the raw amino-acid sequence, 651 residues long: DNA ligase (651 aa).

NAD(+) contacts are provided by residues 32 to 36, 75 to 76, and E106; these read DAEYD and SL. K108 acts as the N6-AMP-lysine intermediate in catalysis. Residues R129, E164, K271, and K295 each coordinate NAD(+). Residues C389, C392, C405, and C411 each coordinate Zn(2+). The 77-residue stretch at 575 to 651 folds into the BRCT domain; it reads SSDSFLNNKI…LDEEQWNRLC (77 aa).

This sequence belongs to the NAD-dependent DNA ligase family. LigA subfamily. Mg(2+) is required as a cofactor. It depends on Mn(2+) as a cofactor.

It carries out the reaction NAD(+) + (deoxyribonucleotide)n-3'-hydroxyl + 5'-phospho-(deoxyribonucleotide)m = (deoxyribonucleotide)n+m + AMP + beta-nicotinamide D-nucleotide.. DNA ligase that catalyzes the formation of phosphodiester linkages between 5'-phosphoryl and 3'-hydroxyl groups in double-stranded DNA using NAD as a coenzyme and as the energy source for the reaction. It is essential for DNA replication and repair of damaged DNA. This chain is DNA ligase, found in Wolbachia pipientis subsp. Culex pipiens (strain wPip).